A 120-amino-acid polypeptide reads, in one-letter code: Large ribosomal subunit protein bL12 (120 aa).

Belongs to the bacterial ribosomal protein bL12 family. As to quaternary structure, homodimer. Part of the ribosomal stalk of the 50S ribosomal subunit. Forms a multimeric L10(L12)X complex, where L10 forms an elongated spine to which 2 to 4 L12 dimers bind in a sequential fashion. Binds GTP-bound translation factors.

Its function is as follows. Forms part of the ribosomal stalk which helps the ribosome interact with GTP-bound translation factors. Is thus essential for accurate translation. In Aeromonas salmonicida (strain A449), this protein is Large ribosomal subunit protein bL12.